The sequence spans 500 residues: Histidine--tRNA ligase (500 aa).

Belongs to the class-II aminoacyl-tRNA synthetase family. Homodimer.

Its subcellular location is the cytoplasm. It carries out the reaction tRNA(His) + L-histidine + ATP = L-histidyl-tRNA(His) + AMP + diphosphate + H(+). In Mesorhizobium japonicum (strain LMG 29417 / CECT 9101 / MAFF 303099) (Mesorhizobium loti (strain MAFF 303099)), this protein is Histidine--tRNA ligase (hisS).